A 546-amino-acid polypeptide reads, in one-letter code: Cysteine desulfurase SufS (546 aa).

A signal peptide spans 1-22; the sequence is MLRGPRCLYIYLFFVFLPFSFC. N6-(pyridoxal phosphate)lysine is present on lysine 291. Cysteine 497 functions as the Cysteine persulfide intermediate in the catalytic mechanism.

Belongs to the class-V pyridoxal-phosphate-dependent aminotransferase family. Csd subfamily. As to quaternary structure, monomer. Interacts with SufE; interaction enhances cysteine desulfurase activity of SufS. Pyridoxal 5'-phosphate is required as a cofactor. Proteolytically cleaved.

The protein resides in the plastid. It localises to the apicoplast. It carries out the reaction (sulfur carrier)-H + L-cysteine = (sulfur carrier)-SH + L-alanine. It participates in cofactor biosynthesis; iron-sulfur cluster biosynthesis. In terms of biological role, catalyzes sulfur activation and mobilization in sulfur mobilization (SUF) pathway for iron-sulfur (Fe-S) cluster biogenesis. Active when in complex with a partner protein SufE. Required for apicoplast maintenance. Plays a role in the development of sporozoites in oocysts in mosquitoes. May provide sulfur for MNMA-mediated tRNA modifications. This Plasmodium falciparum (isolate 3D7) protein is Cysteine desulfurase SufS.